The following is a 249-amino-acid chain: Carbohydrate deacetylase (249 aa).

2 residues coordinate Mg(2+): His60 and His125.

The protein belongs to the YdjC deacetylase family. Homodimer. Requires Mg(2+) as cofactor.

Probably catalyzes the deacetylation of acetylated carbohydrates an important step in the degradation of oligosaccharides. This chain is Carbohydrate deacetylase, found in Thermoanaerobacter pseudethanolicus (strain ATCC 33223 / 39E) (Clostridium thermohydrosulfuricum).